Consider the following 344-residue polypeptide: MVQDTSSASTSPILTRWYIDTRPLTASTAALPLLETLQPADQISVQKYYHLKDKHMSLASNLLKYLFVHRNCRIPWSSIVISRTPDPHRRPCYIPPSGSQEDSFKDGYTGINVEFNVSHQASMVAIAGTAFTPNSGGDSKLKPEVGIDITCVNERQGRNGEERSLESLRQYIDIFSEVFSTAEMANIRRLDGVSSSSLSADRLVDYGYRLFYTYWALKEAYIKMTGEALLAPWLRELEFSNVVAPAAVAESGDSAGDFGEPYTGVRTTLYKNLVEDVRIEVAALGGDYLFATAARGGGIGASSRPGGGPDGSGIRSQDPWRPFKKLDIERDIQPCATGVCNCLS.

This sequence belongs to the P-Pant transferase superfamily.

It carries out the reaction apo-[ACP] + CoA = holo-[ACP] + adenosine 3',5'-bisphosphate + H(+). Functionally, transfers the 4'-phosphopantetheine moiety from coenzyme A to a Ser of an acyl-carrier-protein. The enzyme is able to transfer the cofactor to a broad range of enzymes with acyl- or peptidyl-carrier protein domains. Required for primary biological processes such as growth and asexual/sexual development, and activates target enzymes involved in the synthesis of metabolites such as fatty acids, polyketides and nonribosomal peptides, lysine, siderophore, penicillin, sterigmatocystin, shamixantone, dehydroaustinol, and pigments. In Emericella nidulans (strain FGSC A4 / ATCC 38163 / CBS 112.46 / NRRL 194 / M139) (Aspergillus nidulans), this protein is 4'-phosphopantetheinyl transferase NpgA (npgA).